Consider the following 235-residue polypeptide: Cytidylate kinase (235 aa).

Residue 11–19 participates in ATP binding; sequence GPSGVGKST.

The protein belongs to the cytidylate kinase family. Type 1 subfamily.

It is found in the cytoplasm. It catalyses the reaction CMP + ATP = CDP + ADP. It carries out the reaction dCMP + ATP = dCDP + ADP. This chain is Cytidylate kinase, found in Syntrophotalea carbinolica (strain DSM 2380 / NBRC 103641 / GraBd1) (Pelobacter carbinolicus).